Consider the following 140-residue polypeptide: Nucleoside diphosphate kinase (140 aa).

Positions 11, 59, 87, 93, 104, and 114 each coordinate ATP. The active-site Pros-phosphohistidine intermediate is His-117.

This sequence belongs to the NDK family. In terms of assembly, homotetramer. It depends on Mg(2+) as a cofactor.

The protein resides in the cytoplasm. The catalysed reaction is a 2'-deoxyribonucleoside 5'-diphosphate + ATP = a 2'-deoxyribonucleoside 5'-triphosphate + ADP. The enzyme catalyses a ribonucleoside 5'-diphosphate + ATP = a ribonucleoside 5'-triphosphate + ADP. In terms of biological role, major role in the synthesis of nucleoside triphosphates other than ATP. The ATP gamma phosphate is transferred to the NDP beta phosphate via a ping-pong mechanism, using a phosphorylated active-site intermediate. The polypeptide is Nucleoside diphosphate kinase (Rhodopseudomonas palustris (strain HaA2)).